The following is a 342-amino-acid chain: N-acetyl-gamma-glutamyl-phosphate reductase (342 aa).

The active site involves cysteine 146.

This sequence belongs to the NAGSA dehydrogenase family. Type 1 subfamily.

It is found in the cytoplasm. It catalyses the reaction N-acetyl-L-glutamate 5-semialdehyde + phosphate + NADP(+) = N-acetyl-L-glutamyl 5-phosphate + NADPH + H(+). Its pathway is amino-acid biosynthesis; L-arginine biosynthesis; N(2)-acetyl-L-ornithine from L-glutamate: step 3/4. Functionally, catalyzes the NADPH-dependent reduction of N-acetyl-5-glutamyl phosphate to yield N-acetyl-L-glutamate 5-semialdehyde. The polypeptide is N-acetyl-gamma-glutamyl-phosphate reductase (Frankia casuarinae (strain DSM 45818 / CECT 9043 / HFP020203 / CcI3)).